A 234-amino-acid chain; its full sequence is Synaptogyrin-4 (234 aa).

Residues 18-169 (FLKRPKAITR…QAYLAFQELR (152 aa)) form the MARVEL domain. Transmembrane regions (helical) follow at residues 25 to 45 (ITRI…LTDG), 66 to 86 (CSIA…FLAL), 104 to 124 (LLDL…FCFL), and 145 to 165 (AAIT…YLAF). Positions 191-226 (SPPSAASPVNTPTTGPHGPSYASSSLSPYLSTPKAP) are disordered. Residues 209–221 (PSYASSSLSPYLS) are compositionally biased toward low complexity.

Belongs to the synaptogyrin family.

It localises to the membrane. The protein is Synaptogyrin-4 (SYNGR4) of Bos taurus (Bovine).